The sequence spans 126 residues: Large ribosomal subunit protein bL19 (126 aa).

The protein belongs to the bacterial ribosomal protein bL19 family.

This protein is located at the 30S-50S ribosomal subunit interface and may play a role in the structure and function of the aminoacyl-tRNA binding site. The chain is Large ribosomal subunit protein bL19 from Paracoccus denitrificans (strain Pd 1222).